We begin with the raw amino-acid sequence, 197 residues long: Class A basic helix-loop-helix protein 15 (197 aa).

A compositionally biased stretch (basic residues) spans 1–12 (MKTKNRPPRRRT). Disordered stretches follow at residues 1-82 (MKTK…ERER) and 175-197 (TEDQ…REGS). Residues T12 and T25 each carry the phosphothreonine modification. Polar residues predominate over residues 27-36 (DRSQSGSGAS). Basic and acidic residues predominate over residues 65 to 82 (SRRENSVQRRLESNERER). Residues 72-124 (QRRLESNERERQRMHKLNNAFQALREVIPHVRADKKLSKIETLTLAKNYIKSL) enclose the bHLH domain.

Forms homodimers or heterodimers with TCF3 gene products E12 and E47. These dimers bind to the E-box site, however, heterodimer with MYOD1 does not bind target DNA. As to expression, expressed in liver, spleen and olfactory epithelium. Weaker expression is seen in skeletal muscle, cardiac muscle, eye and brain tissue.

The protein resides in the nucleus. Functionally, plays a role in controlling the transcriptional activity of MyoD, ensuring that expanding myoblast populations remain undifferentiated. Repression may occur through muscle-specific E-box occupancy by homodimers. May also negatively regulate bHLH-mediated transcription through an N-terminal repressor domain. Serves as a key regulator of acinar cell function, stability, and identity. Also required for normal organelle localization in exocrine cells and for mitochondrial calcium ion transport. May function as a unique regulator of gene expression in several different embryonic and postnatal cell lineages. Binds to the E-box consensus sequence 5'-CANNTG-3'. This Rattus norvegicus (Rat) protein is Class A basic helix-loop-helix protein 15 (Bhlha15).